The primary structure comprises 443 residues: Trigger factor (443 aa).

The PPIase FKBP-type domain maps to 161–246 (ADGVTITYHG…VISVTAPRLP (86 aa)).

This sequence belongs to the FKBP-type PPIase family. Tig subfamily.

It is found in the cytoplasm. It catalyses the reaction [protein]-peptidylproline (omega=180) = [protein]-peptidylproline (omega=0). In terms of biological role, involved in protein export. Acts as a chaperone by maintaining the newly synthesized protein in an open conformation. Functions as a peptidyl-prolyl cis-trans isomerase. The protein is Trigger factor of Nitrosococcus oceani (strain ATCC 19707 / BCRC 17464 / JCM 30415 / NCIMB 11848 / C-107).